The chain runs to 337 residues: Probable cytosolic iron-sulfur protein assembly protein CIAO1 homolog (337 aa).

7 WD repeats span residues 15-54 (DDTS…DSKM), 65-104 (SHTR…FAEV), 109-148 (GHES…DFSV), 154-193 (PHTQ…WVTQ), 199-238 (CHVG…SKSA), 253-292 (NTRW…ESPV), and 301-337 (RHEL…ELEI).

Belongs to the WD repeat CIA1 family.

Functionally, essential component of the cytosolic iron-sulfur (Fe/S) protein assembly machinery. Required for the maturation of extramitochondrial Fe/S proteins. The sequence is that of Probable cytosolic iron-sulfur protein assembly protein CIAO1 homolog from Caenorhabditis elegans.